A 688-amino-acid polypeptide reads, in one-letter code: Glycine--tRNA ligase beta subunit (688 aa).

The protein belongs to the class-II aminoacyl-tRNA synthetase family. Tetramer of two alpha and two beta subunits.

It localises to the cytoplasm. The enzyme catalyses tRNA(Gly) + glycine + ATP = glycyl-tRNA(Gly) + AMP + diphosphate. This is Glycine--tRNA ligase beta subunit from Listeria monocytogenes serovar 1/2a (strain ATCC BAA-679 / EGD-e).